A 403-amino-acid polypeptide reads, in one-letter code: Phosphopentomutase (403 aa).

Mn(2+)-binding residues include aspartate 13, aspartate 298, histidine 303, aspartate 339, histidine 340, and histidine 351.

Belongs to the phosphopentomutase family. It depends on Mn(2+) as a cofactor.

Its subcellular location is the cytoplasm. The catalysed reaction is 2-deoxy-alpha-D-ribose 1-phosphate = 2-deoxy-D-ribose 5-phosphate. It carries out the reaction alpha-D-ribose 1-phosphate = D-ribose 5-phosphate. It functions in the pathway carbohydrate degradation; 2-deoxy-D-ribose 1-phosphate degradation; D-glyceraldehyde 3-phosphate and acetaldehyde from 2-deoxy-alpha-D-ribose 1-phosphate: step 1/2. Isomerase that catalyzes the conversion of deoxy-ribose 1-phosphate (dRib-1-P) and ribose 1-phosphate (Rib-1-P) to deoxy-ribose 5-phosphate (dRib-5-P) and ribose 5-phosphate (Rib-5-P), respectively. This chain is Phosphopentomutase, found in Streptococcus equi subsp. zooepidemicus (strain MGCS10565).